A 64-amino-acid polypeptide reads, in one-letter code: Large ribosomal subunit protein uL30 (64 aa).

Belongs to the universal ribosomal protein uL30 family. Part of the 50S ribosomal subunit.

This is Large ribosomal subunit protein uL30 from Bdellovibrio bacteriovorus (strain ATCC 15356 / DSM 50701 / NCIMB 9529 / HD100).